A 131-amino-acid polypeptide reads, in one-letter code: Fumarate reductase subunit C (131 aa).

The next 3 helical transmembrane spans lie at 30–50, 57–77, and 109–129; these read EGTAVPAVWFSIELIFGLFAL, WMGFVGFLQNPVVVILNLIAL, and IIKGLWVVTAVVTVVILYVAL.

This sequence belongs to the FrdC family. In terms of assembly, part of an enzyme complex containing four subunits: a flavoprotein (FrdA), an iron-sulfur protein (FrdB), and two hydrophobic anchor proteins (FrdC and FrdD).

It localises to the cell inner membrane. Functionally, two distinct, membrane-bound, FAD-containing enzymes are responsible for the catalysis of fumarate and succinate interconversion; fumarate reductase is used in anaerobic growth, and succinate dehydrogenase is used in aerobic growth. Anchors the catalytic components of the fumarate reductase complex to the cell inner membrane, binds quinones. This Citrobacter koseri (strain ATCC BAA-895 / CDC 4225-83 / SGSC4696) protein is Fumarate reductase subunit C.